We begin with the raw amino-acid sequence, 186 residues long: Adenine phosphoribosyltransferase (186 aa).

It belongs to the purine/pyrimidine phosphoribosyltransferase family. In terms of assembly, homodimer.

The protein resides in the cytoplasm. It carries out the reaction AMP + diphosphate = 5-phospho-alpha-D-ribose 1-diphosphate + adenine. It participates in purine metabolism; AMP biosynthesis via salvage pathway; AMP from adenine: step 1/1. Functionally, catalyzes a salvage reaction resulting in the formation of AMP, that is energically less costly than de novo synthesis. This Xanthomonas axonopodis pv. citri (strain 306) protein is Adenine phosphoribosyltransferase.